Here is a 300-residue protein sequence, read N- to C-terminus: FNPCPYSDDTVKMIILTRENKKHDFYTLDTIKKHNEFKKSTIKHQVVFITHGFTSSADTENFLAMAKALSDKGNYLVILIDWRVAACTEEMSGIQLAYYSYAASNTRLVGNYIATVTKMLVQKYNVPMANIRLIGHSLGAHTSGFAGKKVQELGLGKYSEIIGLDPAGPSFKSNDCSERICKTDAHYVQIIHTSNHLGTLVTLGTVDFMNNGYNQPGCGLPLIGETCSHTRAVKYFTECIKHECCLIGVPQSKKPQPVSKCTRNECVCVGLNAKTYPKTGSFYVPVESKAPYCNNKGKII.

Cysteine 4 and cysteine 87 form a disulfide bridge. Catalysis depends on serine 137, which acts as the Nucleophile. Catalysis depends on aspartate 165, which acts as the Charge relay system. 2 disulfide bridges follow: cysteine 176–cysteine 181 and cysteine 218–cysteine 227. Residue histidine 229 is the Charge relay system of the active site. Cystine bridges form between cysteine 244/cysteine 268, cysteine 245/cysteine 293, and cysteine 261/cysteine 266.

This sequence belongs to the AB hydrolase superfamily. Lipase family. Expressed by the venom gland.

The protein localises to the secreted. The enzyme catalyses a 1,2-diacyl-sn-glycero-3-phosphocholine + H2O = a 2-acyl-sn-glycero-3-phosphocholine + a fatty acid + H(+). Its activity is regulated as follows. Local inflammatory effects are inhibited by antiserotonin drugs (cyproheptadine and methysergide), indomethacin, betamethasone, and antihistamine (chlorpheniramine). Functionally, catalyzes the hydrolysis of phosphatidylcholine with phospholipase A1 activity. Shows potent hemolytic activity that is responsible for its lethal effect. May act as an allergen. In vivo, induces local inflammatory effects. This chain is Phospholipase A1, found in Vespa basalis (Hornet).